The following is a 555-amino-acid chain: Hydroxylamine reductase (555 aa).

[4Fe-4S] cluster-binding residues include Cys5, Cys8, Cys17, and Cys23. His248, Glu272, Cys316, Cys408, Cys436, Cys461, Glu496, and Lys498 together coordinate hybrid [4Fe-2O-2S] cluster. Cys408 is modified (cysteine persulfide).

This sequence belongs to the HCP family. The cofactor is [4Fe-4S] cluster. Hybrid [4Fe-2O-2S] cluster is required as a cofactor.

It is found in the cytoplasm. The catalysed reaction is A + NH4(+) + H2O = hydroxylamine + AH2 + H(+). Functionally, catalyzes the reduction of hydroxylamine to form NH(3) and H(2)O. The chain is Hydroxylamine reductase from Natranaerobius thermophilus (strain ATCC BAA-1301 / DSM 18059 / JW/NM-WN-LF).